Here is a 196-residue protein sequence, read N- to C-terminus: Protein LSM12 homolog A (196 aa).

Residues 3 to 73 (APGPGEYFSV…VSEVDIINDR (71 aa)) enclose the Sm domain. In terms of domain architecture, AD spans 81 to 175 (ASLNISKLAN…IVEKHFRDVE (95 aa)). The disordered stretch occupies residues 174–196 (VESQKTMQRSQAQQTQKDSSLSS). Positions 177–196 (QKTMQRSQAQQTQKDSSLSS) are enriched in polar residues.

The protein belongs to the LSM12 family.

This is Protein LSM12 homolog A (lsm12a) from Danio rerio (Zebrafish).